A 418-amino-acid polypeptide reads, in one-letter code: EQIMTNQMQGNKAQFNSQNQSNVMPGPAQIMRGPTPNMQGNMVQFTGQMSGQMLPQQGPVSNSPSQVMGIQGQVLRPPGPSPHMAQQHTDPATTANNDVNLSQMMPDVSMQQTSMVPPHVQSMQGNSASGSHFSGHGVSFNAPFGGAPNGTQMSCGQNPGFPVNKDVTLTSPLLVNLLQSDISAGHFGVNNKQNNTNANKQKKKKPPRKKKNCHQDLNTPDSRPAGLEEVDQQSLPGEQGINLDNTGPKLPDFSNRPPGYPTQPVEQRPLQQMPPQLMQHVAPPPQPPQQQPQPQLPQQQPQPQPPPPSQPQSQQQQQQQQQQQQQQMMMMLMMQQDPKSIRLPVSQNVHPPRGPLNPDSQRVPMQQSGNVPVMVSLQGPASVPPSPDKQRMPMPVNTPLGSNSRKMVYQESPQNSSS.

Disordered stretches follow at residues 1–21 and 77–98; these read EQIMTNQMQGNKAQFNSQNQS and PPGPSPHMAQQHTDPATTANND. The tract at residues 1–215 is TBP/GTF2A-binding region; it reads EQIMTNQMQG…PPRKKKNCHQ (215 aa). Positions 1-352 are CREBBP-binding region; it reads EQIMTNQMQG…LPVSQNVHPP (352 aa). Residues 1-418 are NCOA1-binding region; the sequence is EQIMTNQMQG…YQESPQNSSS (418 aa). Positions 60–214 are NCOA6IP-binding region; the sequence is VSNSPSQVMG…KPPRKKKNCH (155 aa). The segment covering 84–98 has biased composition (polar residues); the sequence is MAQQHTDPATTANND. Phosphoserine is present on Ser171. The short motif at 174-178 is the LXXLL motif element; that stretch reads LVNLL. Residues 186-418 are disordered; sequence HFGVNNKQNN…YQESPQNSSS (233 aa). Over residues 190 to 199 the composition is skewed to low complexity; the sequence is NNKQNNTNAN. The span at 200-212 shows a compositional bias: basic residues; sequence KQKKKKPPRKKKN. A compositionally biased stretch (low complexity) spans 269–279; sequence PLQQMPPQLMQ. Pro residues predominate over residues 282–310; the sequence is APPPQPPQQQPQPQLPQQQPQPQPPPPSQ. The span at 311 to 336 shows a compositional bias: low complexity; it reads PQSQQQQQQQQQQQQQQMMMMLMMQQ. Asymmetric dimethylarginine occurs at positions 342 and 353. Polar residues predominate over residues 358–370; sequence PDSQRVPMQQSGN. Residue Arg391 is modified to Asymmetric dimethylarginine. Over residues 399 to 418 the composition is skewed to polar residues; the sequence is PLGSNSRKMVYQESPQNSSS.

As to quaternary structure, monomer and homodimer. Interacts in vitro with the basal transcription factors GTF2A and TBP, suggesting an autonomous transactivation function. Interacts with NCOA1, CRSP3, RBM14, the histone acetyltransferase proteins EP300 and CREBBP, and with methyltransferase proteins NCOA6IP and PRMT2. Component of the MLL2/3 complex (also named ASCOM complex), at least composed of KMT2D/MLL2 or KMT2C/MLL3, ASH2L, RBBP5, WDR5, NCOA6, DPY30, KDM6A, PAXIP1/PTIP, PAGR1 and alpha- and beta-tubulin. Interacts with ZNF335; may enhance ligand-dependent transcriptional activation by nuclear hormone receptors. Phosphorylated.

The protein localises to the nucleus. Functionally, nuclear receptor coactivator that directly binds nuclear receptors and stimulates the transcriptional activities in a hormone-dependent fashion. Coactivate expression in an agonist- and AF2-dependent manner. May coactivate expression via a remodeling of chromatin and its interaction with histone acetyltransferase proteins. Involved in the coactivation of different nuclear receptors, such as for steroids (GR and ERs), retinoids (RARs and RXRs), thyroid hormone (TRs), vitamin D3 (VDR) and prostanoids (PPARs). Probably functions as a general coactivator, rather than just a nuclear receptor coactivator. May also be involved in the coactivation of the NF-kappa-B pathway. The chain is Nuclear receptor coactivator 6 (Ncoa6) from Rattus norvegicus (Rat).